The sequence spans 201 residues: Holliday junction branch migration complex subunit RuvA (201 aa).

A domain I region spans residues 1 to 64; sequence MYEYIRGQFQ…EDFIGLYGFT (64 aa). Residues 65-143 form a domain II region; that stretch reads TREELEMFKL…PDELTSEEGQ (79 aa). Residues 144 to 152 form a flexible linker region; it reads LIEGINDNS. The tract at residues 153–201 is domain III; it reads DYSFNINETLSALMALGYTEKEAQKALEKVDKTLSIENMIKESLKLLMR.

The protein belongs to the RuvA family. Homotetramer. Forms an RuvA(8)-RuvB(12)-Holliday junction (HJ) complex. HJ DNA is sandwiched between 2 RuvA tetramers; dsDNA enters through RuvA and exits via RuvB. An RuvB hexamer assembles on each DNA strand where it exits the tetramer. Each RuvB hexamer is contacted by two RuvA subunits (via domain III) on 2 adjacent RuvB subunits; this complex drives branch migration. In the full resolvosome a probable DNA-RuvA(4)-RuvB(12)-RuvC(2) complex forms which resolves the HJ.

The protein resides in the cytoplasm. Functionally, the RuvA-RuvB-RuvC complex processes Holliday junction (HJ) DNA during genetic recombination and DNA repair, while the RuvA-RuvB complex plays an important role in the rescue of blocked DNA replication forks via replication fork reversal (RFR). RuvA specifically binds to HJ cruciform DNA, conferring on it an open structure. The RuvB hexamer acts as an ATP-dependent pump, pulling dsDNA into and through the RuvAB complex. HJ branch migration allows RuvC to scan DNA until it finds its consensus sequence, where it cleaves and resolves the cruciform DNA. This chain is Holliday junction branch migration complex subunit RuvA, found in Clostridium perfringens (strain 13 / Type A).